A 283-amino-acid chain; its full sequence is MKIIGGPASQLLASRTARALGTEPVLCEFNRFPDGELYLRIADEIENEKVTIIQSTPTDSDFVALLQLIDACEGAAEINVVIPYMGYARQDKKFKPGESISARAIARCINASRIFTINIHERSILDHFPCPAVNLDAASLVGEYIAGSGLENPMLVAPDEGAQGLVKNVAAGHGFDHDHLQKTRLSGDTVVIKTKNLDVTGRHVVLVDDMIATGGTMAESVRMLKAQGAIDVHLACVHPVLTRNAALRLFNAGVKDIIATDTLEKAESLLSVAPLIAEALKRL.

Residues 34 to 36 and 89 to 90 each bind ATP; these read DGE and RQ. Positions 120 and 159 each coordinate Mg(2+). Lysine 182 is an active-site residue. D-ribose 5-phosphate is bound by residues arginine 184 and aspartate 208.

Belongs to the ribose-phosphate pyrophosphokinase family. Class III (archaeal) subfamily. It depends on Mg(2+) as a cofactor.

The protein localises to the cytoplasm. The enzyme catalyses D-ribose 5-phosphate + ATP = 5-phospho-alpha-D-ribose 1-diphosphate + AMP + H(+). It functions in the pathway metabolic intermediate biosynthesis; 5-phospho-alpha-D-ribose 1-diphosphate biosynthesis; 5-phospho-alpha-D-ribose 1-diphosphate from D-ribose 5-phosphate (route I): step 1/1. Its function is as follows. Involved in the biosynthesis of the central metabolite phospho-alpha-D-ribosyl-1-pyrophosphate (PRPP) via the transfer of pyrophosphoryl group from ATP to 1-hydroxyl of ribose-5-phosphate (Rib-5-P). The chain is Ribose-phosphate pyrophosphokinase from Methanosarcina acetivorans (strain ATCC 35395 / DSM 2834 / JCM 12185 / C2A).